Reading from the N-terminus, the 332-residue chain is Cytochrome c1, heme protein, mitochondrial (332 aa).

The N-terminal 70 residues, 1–70 (MLARTCLRST…YYHLYGFASA (70 aa)), are a transit peptide targeting the mitochondrion. Over 71 to 277 (MTPAEEGLHA…AEPEMDDRKR (207 aa)) the chain is Mitochondrial intermembrane. The Cytochrome c domain maps to 97–250 (QALRRGFQVY…GLVDYEDGTP (154 aa)). Cys110, Cys113, and His114 together coordinate heme c. The span at 139–151 (EENEYDTEPNDQG) shows a compositional bias: acidic residues. The interval 139 to 162 (EENEYDTEPNDQGEIEKRPGKLSD) is disordered. Met234 lines the heme c pocket. Residues 278–296 (MGMKVLVVTSVLFALSVYV) traverse the membrane as a helical segment. Residues 297-332 (KRYKWAWLKSRKIVYDPPKSPPPATNLALPQQRAKS) are Mitochondrial matrix-facing.

This sequence belongs to the cytochrome c family. Component of the ubiquinol-cytochrome c oxidoreductase (cytochrome b-c1 complex, complex III, CIII), a multisubunit enzyme composed of 10 subunits. The complex is composed of 3 respiratory subunits cytochrome b (cob), cytochrome c1 (cyt-1) and Rieske protein (fes-1), 2 core protein subunits pep and ucr-1, and 5 low-molecular weight protein subunits qcr6, qcr7, qcr8, qcr9 and probably NCU16844/qcr10. The complex exists as an obligatory dimer and forms supercomplexes (SCs) in the inner mitochondrial membrane with NADH-ubiquinone oxidoreductase (complex I, CI) and cytochrome c oxidase (complex IV, CIV), resulting in different assemblies (supercomplexes SCI(1)III(2), SCIII(2)IV(1) and SCIII(2)IV(2) as well as higher order I(x)III(y)IV(z) megacomplexes). Requires heme c as cofactor.

It localises to the mitochondrion inner membrane. The enzyme catalyses a quinol + 2 Fe(III)-[cytochrome c](out) = a quinone + 2 Fe(II)-[cytochrome c](out) + 2 H(+)(out). Its function is as follows. Component of the ubiquinol-cytochrome c oxidoreductase, a multisubunit transmembrane complex that is part of the mitochondrial electron transport chain which drives oxidative phosphorylation. The respiratory chain contains 3 multisubunit complexes succinate dehydrogenase (complex II, CII), ubiquinol-cytochrome c oxidoreductase (cytochrome b-c1 complex, complex III, CIII) and cytochrome c oxidase (complex IV, CIV), that cooperate to transfer electrons derived from NADH and succinate to molecular oxygen, creating an electrochemical gradient over the inner membrane that drives transmembrane transport and the ATP synthase. The cytochrome b-c1 complex catalyzes electron transfer from ubiquinol to cytochrome c, linking this redox reaction to translocation of protons across the mitochondrial inner membrane, with protons being carried across the membrane as hydrogens on the quinol. In the process called Q cycle, 2 protons are consumed from the matrix, 4 protons are released into the intermembrane space and 2 electrons are passed to cytochrome c. Cytochrome c1 is a catalytic core subunit containing a c-type heme. It transfers electrons from the [2Fe-2S] iron-sulfur cluster of the Rieske protein to cytochrome c. The chain is Cytochrome c1, heme protein, mitochondrial (cyt-1) from Neurospora crassa (strain ATCC 24698 / 74-OR23-1A / CBS 708.71 / DSM 1257 / FGSC 987).